A 363-amino-acid polypeptide reads, in one-letter code: Fructose-bisphosphate aldolase (363 aa).

R56 and K147 together coordinate substrate. Catalysis depends on E188, which acts as the Proton acceptor. Residue K230 is the Schiff-base intermediate with dihydroxyacetone-P of the active site.

This sequence belongs to the class I fructose-bisphosphate aldolase family.

It carries out the reaction beta-D-fructose 1,6-bisphosphate = D-glyceraldehyde 3-phosphate + dihydroxyacetone phosphate. It functions in the pathway carbohydrate degradation; glycolysis; D-glyceraldehyde 3-phosphate and glycerone phosphate from D-glucose: step 4/4. The polypeptide is Fructose-bisphosphate aldolase (FBPA) (Echinococcus multilocularis (Fox tapeworm)).